The chain runs to 112 residues: Pediocin PA-1 immunity protein (112 aa).

Imparts immunity to pediocin PA-1/ACH to naturally sensitive host strains. This chain is Pediocin PA-1 immunity protein (pedB), found in Pediococcus acidilactici.